The primary structure comprises 73 residues: Translation initiation factor IF-1 (73 aa).

Residues 1 to 72 (MAKDEIIEFE…SKGRITYRGK (72 aa)) enclose the S1-like domain.

The protein belongs to the IF-1 family. Component of the 30S ribosomal translation pre-initiation complex which assembles on the 30S ribosome in the order IF-2 and IF-3, IF-1 and N-formylmethionyl-tRNA(fMet); mRNA recruitment can occur at any time during PIC assembly.

It is found in the cytoplasm. Its function is as follows. One of the essential components for the initiation of protein synthesis. Stabilizes the binding of IF-2 and IF-3 on the 30S subunit to which N-formylmethionyl-tRNA(fMet) subsequently binds. Helps modulate mRNA selection, yielding the 30S pre-initiation complex (PIC). Upon addition of the 50S ribosomal subunit IF-1, IF-2 and IF-3 are released leaving the mature 70S translation initiation complex. This Psychrobacter arcticus (strain DSM 17307 / VKM B-2377 / 273-4) protein is Translation initiation factor IF-1.